Here is a 260-residue protein sequence, read N- to C-terminus: Purine nucleoside phosphorylase PD_1754 (260 aa).

The Zn(2+) site is built by His-79, Cys-120, and His-137.

This sequence belongs to the purine nucleoside phosphorylase YfiH/LACC1 family. As to quaternary structure, homodimer. The cofactor is Cu(2+). It depends on Zn(2+) as a cofactor.

It catalyses the reaction adenosine + phosphate = alpha-D-ribose 1-phosphate + adenine. The enzyme catalyses S-methyl-5'-thioadenosine + phosphate = 5-(methylsulfanyl)-alpha-D-ribose 1-phosphate + adenine. It carries out the reaction inosine + phosphate = alpha-D-ribose 1-phosphate + hypoxanthine. The catalysed reaction is adenosine + H2O + H(+) = inosine + NH4(+). Purine nucleoside enzyme that catalyzes the phosphorolysis of adenosine and inosine nucleosides, yielding D-ribose 1-phosphate and the respective free bases, adenine and hypoxanthine. Also catalyzes the phosphorolysis of S-methyl-5'-thioadenosine into adenine and S-methyl-5-thio-alpha-D-ribose 1-phosphate. Also has adenosine deaminase activity. The chain is Purine nucleoside phosphorylase PD_1754 from Xylella fastidiosa (strain Temecula1 / ATCC 700964).